Here is a 377-residue protein sequence, read N- to C-terminus: Dual-specificity RNA methyltransferase RlmN (377 aa).

Residue Glu-102 is the Proton acceptor of the active site. In terms of domain architecture, Radical SAM core spans 108–345 (EPDRRTLCVS…AVVRKNRGGD (238 aa)). Cys-115 and Cys-350 are disulfide-bonded. Residues Cys-122, Cys-126, and Cys-129 each coordinate [4Fe-4S] cluster. S-adenosyl-L-methionine-binding positions include 177-178 (GE), Ser-209, 231-233 (SLN), and Asn-307. Residue Cys-350 is the S-methylcysteine intermediate of the active site. The segment at 354 to 377 (AAEGGPGDPRRPAPPPLTRLPAAG) is disordered.

It belongs to the radical SAM superfamily. RlmN family. [4Fe-4S] cluster is required as a cofactor.

The protein localises to the cytoplasm. It catalyses the reaction adenosine(2503) in 23S rRNA + 2 reduced [2Fe-2S]-[ferredoxin] + 2 S-adenosyl-L-methionine = 2-methyladenosine(2503) in 23S rRNA + 5'-deoxyadenosine + L-methionine + 2 oxidized [2Fe-2S]-[ferredoxin] + S-adenosyl-L-homocysteine. The catalysed reaction is adenosine(37) in tRNA + 2 reduced [2Fe-2S]-[ferredoxin] + 2 S-adenosyl-L-methionine = 2-methyladenosine(37) in tRNA + 5'-deoxyadenosine + L-methionine + 2 oxidized [2Fe-2S]-[ferredoxin] + S-adenosyl-L-homocysteine. Its function is as follows. Specifically methylates position 2 of adenine 2503 in 23S rRNA and position 2 of adenine 37 in tRNAs. m2A2503 modification seems to play a crucial role in the proofreading step occurring at the peptidyl transferase center and thus would serve to optimize ribosomal fidelity. In Anaeromyxobacter sp. (strain Fw109-5), this protein is Dual-specificity RNA methyltransferase RlmN.